The chain runs to 222 residues: Type II restriction enzyme AbrI (222 aa).

2 disordered regions span residues Gly-21–Arg-45 and Asn-161–Ile-222. Residues Asn-22–Arg-42 show a composition bias toward basic and acidic residues. Over residues Ser-188 to Pro-202 the composition is skewed to low complexity.

It belongs to the XhoI type II restriction endonuclease family.

It carries out the reaction Endonucleolytic cleavage of DNA to give specific double-stranded fragments with terminal 5'-phosphates.. Functionally, a P subtype restriction enzyme that recognizes the double-stranded sequence 5'-CTCGAG-3' and cleaves after C-1. The polypeptide is Type II restriction enzyme AbrI (abrIR) (Azospirillum brasilense).